A 503-amino-acid polypeptide reads, in one-letter code: MRAKVRILNIRSGHFDVFINPKDAQEWKLHPNDLVKIESGKRSIYGSVVIGDFVESGEVGLSLDILDAYQFSEGELVSITPSETPESVRYIKKKMRGEKLRKVEIETIVRDIVDRKLRNTEISALVTAIEVNGLDMDEIAALTIAMAETGDMLDIDRKPIMDVHSIGGVPGNKTNIIVVPIVAAAGLTIPKTSSRAITSAAGTADVVEVFTNVTLSLDEIKRIVEKIGACLVWGGALNLAPADDLTIHVERRLSLDPRGLMLASIMSKKYAIGSQYILIDIPTGKGAKVETMEEARSLAKDFIELGKKLGQYVEVAITYGGQPIGYTVGPALEAKEALETLMTGKGPGSLVEKALGLAGILLEMGGVAPRGMGKKVAREILESGKAYEKIKEIIEEQGGDPNIKPEDIPIGDKTYTIHAQTSGYVTGIDNKAITAIAREAGAPEDKGAGVKLHVKVGEKVKEGDPLFTIHAESESRLDKAIILARRLEPIKIEGMVLQVLGNL.

AMP contacts are provided by residues Gly168, 194 to 199 (SRAITS), and Thr203. Catalysis depends on Asp256, which acts as the Proton donor. Residues Ser264 and Lys288 each coordinate AMP.

Belongs to the thymidine/pyrimidine-nucleoside phosphorylase family. Type 2 subfamily.

It catalyses the reaction AMP + phosphate = alpha-D-ribose 1,5-bisphosphate + adenine. The enzyme catalyses CMP + phosphate = cytosine + alpha-D-ribose 1,5-bisphosphate. It carries out the reaction UMP + phosphate = alpha-D-ribose 1,5-bisphosphate + uracil. In terms of biological role, catalyzes the conversion of AMP and phosphate to adenine and ribose 1,5-bisphosphate (R15P). Exhibits phosphorylase activity toward CMP and UMP in addition to AMP. Functions in an archaeal AMP degradation pathway, together with R15P isomerase and RubisCO. This Pyrococcus abyssi (strain GE5 / Orsay) protein is AMP phosphorylase (deoA).